A 456-amino-acid polypeptide reads, in one-letter code: Bifunctional protein GlmU (456 aa).

The segment at 1–229 (MYKSAVILAA…PDEIKGVNSR (229 aa)) is pyrophosphorylase. UDP-N-acetyl-alpha-D-glucosamine-binding positions include 8–11 (LAAG), Lys-22, Gln-73, and 78–79 (GT). Asp-103 contributes to the Mg(2+) binding site. Residues Gly-140, Glu-155, Asn-170, and Asn-227 each coordinate UDP-N-acetyl-alpha-D-glucosamine. Asn-227 provides a ligand contact to Mg(2+). Residues 230–250 (GQLAEAEEILRLRINERHMEN) form a linker region. An N-acetyltransferase region spans residues 251–456 (GVTLIDPKNT…GWVAKKGLKK (206 aa)). 2 residues coordinate UDP-N-acetyl-alpha-D-glucosamine: Arg-332 and Lys-350. His-362 acts as the Proton acceptor in catalysis. The UDP-N-acetyl-alpha-D-glucosamine site is built by Tyr-365 and Asn-376. Residues 385–386 (NY), Ala-422, and Arg-439 each bind acetyl-CoA.

It in the N-terminal section; belongs to the N-acetylglucosamine-1-phosphate uridyltransferase family. The protein in the C-terminal section; belongs to the transferase hexapeptide repeat family. As to quaternary structure, homotrimer. Mg(2+) is required as a cofactor.

The protein resides in the cytoplasm. The enzyme catalyses alpha-D-glucosamine 1-phosphate + acetyl-CoA = N-acetyl-alpha-D-glucosamine 1-phosphate + CoA + H(+). It carries out the reaction N-acetyl-alpha-D-glucosamine 1-phosphate + UTP + H(+) = UDP-N-acetyl-alpha-D-glucosamine + diphosphate. It functions in the pathway nucleotide-sugar biosynthesis; UDP-N-acetyl-alpha-D-glucosamine biosynthesis; N-acetyl-alpha-D-glucosamine 1-phosphate from alpha-D-glucosamine 6-phosphate (route II): step 2/2. The protein operates within nucleotide-sugar biosynthesis; UDP-N-acetyl-alpha-D-glucosamine biosynthesis; UDP-N-acetyl-alpha-D-glucosamine from N-acetyl-alpha-D-glucosamine 1-phosphate: step 1/1. It participates in bacterial outer membrane biogenesis; LPS lipid A biosynthesis. Catalyzes the last two sequential reactions in the de novo biosynthetic pathway for UDP-N-acetylglucosamine (UDP-GlcNAc). The C-terminal domain catalyzes the transfer of acetyl group from acetyl coenzyme A to glucosamine-1-phosphate (GlcN-1-P) to produce N-acetylglucosamine-1-phosphate (GlcNAc-1-P), which is converted into UDP-GlcNAc by the transfer of uridine 5-monophosphate (from uridine 5-triphosphate), a reaction catalyzed by the N-terminal domain. In Clostridium novyi (strain NT), this protein is Bifunctional protein GlmU.